Consider the following 212-residue polypeptide: uncharacterized protein (212 aa).

Transmembrane regions (helical) follow at residues 54 to 74 and 79 to 99; these read LCFALTLLLTLGGTISAGYAG and WIICGIGLGIIVLTLILALLL.

The protein localises to the cell membrane. This is an uncharacterized protein from Chlamydia pneumoniae (Chlamydophila pneumoniae).